The primary structure comprises 703 residues: Polyribonucleotide nucleotidyltransferase (703 aa).

Asp484 and Asp490 together coordinate Mg(2+). The 60-residue stretch at 551-610 folds into the KH domain; it reads PQMIRMQIDPDKIREVIGPGGKTIHKIVDETGCKIDIEDDGSLFIMATDEEAAKKARFFV. Residues 620–694 enclose the S1 motif domain; it reads GKTYMGTVKR…RQGRVNLSRK (75 aa).

The protein belongs to the polyribonucleotide nucleotidyltransferase family. Mg(2+) is required as a cofactor.

It is found in the cytoplasm. The catalysed reaction is RNA(n+1) + phosphate = RNA(n) + a ribonucleoside 5'-diphosphate. Its function is as follows. Involved in mRNA degradation. Catalyzes the phosphorolysis of single-stranded polyribonucleotides processively in the 3'- to 5'-direction. In Syntrophomonas wolfei subsp. wolfei (strain DSM 2245B / Goettingen), this protein is Polyribonucleotide nucleotidyltransferase.